Here is a 1002-residue protein sequence, read N- to C-terminus: yemanuclein (1002 aa).

Positions 80-85 match the Nuclear localization signal motif; sequence KKKTKK. Disordered stretches follow at residues 193 to 358, 395 to 428, and 642 to 725; these read AIIK…KKVV, VSTD…GQEN, and KLKA…AKQV. Low complexity predominate over residues 207-217; the sequence is SSSSESSSSSS. Over residues 218 to 262 the composition is skewed to acidic residues; it reads GDDDENDDGNNEEDDESDSEDDSEENDESDSEDDSESESLEDEDS. 2 consecutive repeat copies span residues 230–241 and 242–253. Residues 230 to 253 form a 2 X 12 AA tandem repeats region; it reads EDDESDSEDDSEENDESDSEDDSE. Low complexity-rich tracts occupy residues 286–320, 336–358, and 395–404; these read TGKS…RPST, QPSS…KKVV, and VSTDVSSSDS. Residues 408–427 are compositionally biased toward basic and acidic residues; that stretch reads ESEHGRADRQAGQHGKDGQE. The segment covering 653 to 667 has biased composition (low complexity); the sequence is PASASPKPVGVVSAP. The segment covering 679–689 has biased composition (basic and acidic residues); that stretch reads AVEDPRSRGNS. Phosphoserine is present on residues S685 and S689. A compositionally biased stretch (low complexity) spans 690 to 701; that stretch reads DTDSATSASSNS. 3 positions are modified to phosphoserine: S885, S886, and S887. The tract at residues 901 to 928 is disordered; sequence SKPQKKVQSKPKNKTQNRGRSSLGAVGQ. Residues 903–917 are compositionally biased toward basic residues; the sequence is PQKKVQSKPKNKTQN.

Post-translationally, the N-terminus is blocked. In terms of tissue distribution, oocyte specific.

It localises to the nucleus. The protein localises to the nucleoplasm. Its subcellular location is the chromosome. It is found in the centromere. The protein resides in the kinetochore. Functionally, may play a key role in egg organization. May be a transcriptional regulator having a role in chromatin remodeling in concert with Hira, a histone chaperone. Involved in chromosome segregation by affecting kinetochores function in the first meiotic division. The polypeptide is yemanuclein (Drosophila melanogaster (Fruit fly)).